The sequence spans 446 residues: Alkylglycerol monooxygenase (446 aa).

A run of 2 helical transmembrane segments spans residues 43–63 (ATVY…AWKG) and 110–130 (WDSP…YYWF). The Fatty acid hydroxylase domain occupies 118-248 (LTFLGVDFGY…LIIWDRMFGT (131 aa)). The short motif at 131–135 (HRMAH) is the Histidine box-1 element. A Histidine box-2 motif is present at residues 144-148 (HQTHH). A helical membrane pass occupies residues 167 to 187 (YFSWMFYWPMAFCIPPSVFAV). A Histidine box-3 motif is present at residues 220-224 (HRVHH). A run of 3 helical transmembrane segments spans residues 339–359 (MMHF…KLIL), 362–382 (ATLL…GFIF), and 412–434 (VPYL…GLKA).

It belongs to the sterol desaturase family. TMEM195 subfamily. Fe cation is required as a cofactor.

The protein localises to the endoplasmic reticulum membrane. The catalysed reaction is 1-O-(1,2-saturated-alkyl)-sn-glycerol + (6R)-L-erythro-5,6,7,8-tetrahydrobiopterin + O2 = a 1-(1-hydroxyalkyl)-sn-glycerol + (6R)-L-erythro-6,7-dihydrobiopterin + H2O. In terms of biological role, glyceryl-ether monooxygenase that cleaves the O-alkyl bond of ether lipids. Ether lipids are essential components of brain membranes. In Xenopus tropicalis (Western clawed frog), this protein is Alkylglycerol monooxygenase (agmo).